Here is a 183-residue protein sequence, read N- to C-terminus: Adenine phosphoribosyltransferase (183 aa).

The protein belongs to the purine/pyrimidine phosphoribosyltransferase family. In terms of assembly, homodimer.

It localises to the cytoplasm. It catalyses the reaction AMP + diphosphate = 5-phospho-alpha-D-ribose 1-diphosphate + adenine. It participates in purine metabolism; AMP biosynthesis via salvage pathway; AMP from adenine: step 1/1. In terms of biological role, catalyzes a salvage reaction resulting in the formation of AMP, that is energically less costly than de novo synthesis. The sequence is that of Adenine phosphoribosyltransferase from Corynebacterium kroppenstedtii (strain DSM 44385 / JCM 11950 / CIP 105744 / CCUG 35717).